The chain runs to 766 residues: MASDTPESLMALCTDFCLRNLDGTLGYLLDKETLRLHPDIFLPSEICDRLVNEYVELVNAACNFEPHESFFSLFSDPRSTRLTRIHLREDLVQDQDLEAIRKQDLVELYLTNCEKLSAKSLQTLRSFSHTLVSLSLFGCTNIFYEEENPGGCEDEYLVNPTCQVLVKDFTFEGFSRLRFLNLGRMIDWVPVESLLRPLNSLAALDLSGIQTSDAAFLTQWKDSLVSLVLYNMDLSDDHIRVIVQLHKLRHLDISRDRLSSYYKFKLTREVLSLFVQKLGNLMSLDISGHMILENCSISKMEEEAGQTSIEPSKSSIIPFRALKRPLQFLGLFENSLCRLTHIPAYKVSGDKNEEQVLNAIEAYTEHRPEITSRAINLLFDIARIERCNQLLRALKLVITALKCHKYDRNIQVTGSAALFYLTNSEYRSEQSVKLRRQVIQVVLNGMESYQEVTVQRNCCLTLCNFSIPEELEFQYRRVNELLLSILNPTRQDESIQRIAVHLCNALVCQVDNDHKEAVGKMGFVVTMLKLIQKKLLDKTCDQVMEFSWSALWNITDETPDNCEMFLNFNGMKLFLDCLKEFPEKQELHRNMLGLLGNVAEVKELRPQLMTSQFISVFSNLLESKADGIEVSYNACGVLSHIMFDGPEAWGVCEPQREEVEERMWAAIQSWDINSRRNINYRSFEPILRLLPQGISPVSQHWATWALYNLVSVYPDKYCPLLIKEGGMPLLRDIIKMATARQETKEMARKVIEHCSNFKEENMDTSR.

Residue Ala-2 is modified to N-acetylalanine. LRR repeat units lie at residues 226 to 245 (SLVL…IVQL), 246 to 268 (HKLR…KLTR), and 278 to 302 (LGNL…KMEE). ARM repeat units lie at residues 427–467 (RSEQ…NFSI), 511–556 (DNDH…NITD), 558–600 (TPDN…NVAE), 602–643 (KELR…HIMF), and 714–756 (PDKY…HCSN).

The protein belongs to the zyg-11 family. In terms of assembly, interacts with the ELOC-ELOB/Elongin BC complex. Part of an E3 ubiquitin ligase complex including ZER1, CUL2 and Elongin BC. Expressed in testis, spermatocytes and spermatids (at protein level). Expressed in spermatocytes, spermatids, prostate, skeletal muscle, ovary, small intestine, heart, brain and pancreas.

Its function is as follows. Serves as substrate adapter subunit in the E3 ubiquitin ligase complex ZYG11B-CUL2-Elongin BC. Acts to target substrates bearing N-terminal degrons for proteasomal degradation with the first four residues of substrates being the key recognition elements. Involved in the clearance of proteolytic fragments generated by caspase cleavage during apoptosis since N-terminal glycine degrons are strongly enriched at caspase cleavage sites. Also important in the quality control of protein N-myristoylation in which N-terminal glycine degrons are conditionally exposed after a failure of N-myristoylation. This Homo sapiens (Human) protein is Protein zer-1 homolog.